A 548-amino-acid chain; its full sequence is 2-succinyl-5-enolpyruvyl-6-hydroxy-3-cyclohexene-1-carboxylate synthase (548 aa).

The protein belongs to the TPP enzyme family. MenD subfamily. In terms of assembly, homodimer. The cofactor is Mg(2+). Mn(2+) is required as a cofactor. It depends on thiamine diphosphate as a cofactor.

It carries out the reaction isochorismate + 2-oxoglutarate + H(+) = 5-enolpyruvoyl-6-hydroxy-2-succinyl-cyclohex-3-ene-1-carboxylate + CO2. It participates in quinol/quinone metabolism; 1,4-dihydroxy-2-naphthoate biosynthesis; 1,4-dihydroxy-2-naphthoate from chorismate: step 2/7. The protein operates within quinol/quinone metabolism; menaquinone biosynthesis. Catalyzes the thiamine diphosphate-dependent decarboxylation of 2-oxoglutarate and the subsequent addition of the resulting succinic semialdehyde-thiamine pyrophosphate anion to isochorismate to yield 2-succinyl-5-enolpyruvyl-6-hydroxy-3-cyclohexene-1-carboxylate (SEPHCHC). The chain is 2-succinyl-5-enolpyruvyl-6-hydroxy-3-cyclohexene-1-carboxylate synthase from Mycobacterium ulcerans (strain Agy99).